The primary structure comprises 103 residues: Large ribosomal subunit protein bL21 (103 aa).

This sequence belongs to the bacterial ribosomal protein bL21 family. Part of the 50S ribosomal subunit. Contacts protein L20.

Functionally, this protein binds to 23S rRNA in the presence of protein L20. In Thiobacillus denitrificans (strain ATCC 25259 / T1), this protein is Large ribosomal subunit protein bL21.